The chain runs to 285 residues: uncharacterized protein (285 aa).

The next 6 helical transmembrane spans lie at 7-29, 49-71, 95-117, 137-156, 232-254, and 259-281; these read FYRLVKNTLLTAFILSLILLTLQ, LVVWNAYYTYFFIPEGVILSTFF, IFLYCSIPFLTFFLISALLSNTL, FFSEVPAGTFVSFGAVVLHA, KVVNYVNVATLPLFFFLSFTVAL, and GGLSYYAFASLFIVVHQLIIFVV.

It is found in the cell membrane. This is an uncharacterized protein from Aquifex aeolicus (strain VF5).